Here is a 109-residue protein sequence, read N- to C-terminus: MTERKHDDTGVEEGTGLATKTRPATKKPSLYRVLLLNDDYTPMEFVVEVLARIFRKSPEDAARIMLHVHQNGVGMCGVYTYEVAETKVAQVMDAARRAQHPLQCTMEKE.

The tract at residues 1-23 is disordered; sequence MTERKHDDTGVEEGTGLATKTRP.

Belongs to the ClpS family. As to quaternary structure, binds to the N-terminal domain of the chaperone ClpA.

Functionally, involved in the modulation of the specificity of the ClpAP-mediated ATP-dependent protein degradation. The protein is ATP-dependent Clp protease adapter protein ClpS of Maricaulis maris (strain MCS10) (Caulobacter maris).